We begin with the raw amino-acid sequence, 790 residues long: MSSNTTTPTPTSTPTPTSSPSIGPVPIPYESASFGNLLFFAISLVLCGVVVLIGMKQYISLKRTPIYATFFSFLGWFMCFSIAYLVPLDIIVTDHLQCVIENNETLTGECEIPVTYLPYGMITQQWRFLYFGSLILCWVIFPVLQSFSTAGDFRFWERVKRATKENVILYTFMFIAGLIGIIVILSVKEMDPSSFLSFVMLLANVYGVILITITMGYGLIDVPRNLLRKGSHYAILRNYRVEAVVLKTELEDVKRQLIDHLKLIKTISDRAGQYDPFRIYLDVIISKCPTEYDVLIQEYHAEPLPAGMEAEILSYKYLVGIHSTLLDLVDRNHSAEVLYERLLGKAFAIEDIIETRERNKQTAGNNQIAGEERSIQWSFKSTKSNGKFEYLWHMYIHPWYFIIAGLVCVCLSGIILWSEIVLALVSNPDYSPFYRAIVRMEPGIGLQIFCFIPMIYMCVCSYSTLFKLRISNYYRLVPQQSNTFSIMFSANYLCRLAAPLAYNFIQICHVNQDNSIVSPFSKIMGDMNAFGDNALGKRFTLFFPIFMIVVCVISFFNLHKRLAGSCCIRSLRIVTDTSEGAVDHGLKILKQEREERSLTGGVAPVKTRMSIVKEMFTKKKGAGILVTDNSQLDGASGAHREPSIDSSNRYKPTPTKTSINIPKLSRTYTSAAGNVYSSTQDGDENSNSGIKPINSFFSSILGEKGNASNNNNNNNNNNNNNNSNNKNSNNNNNSILTSNYESYSTPRTKDKQGLLSSALDKMDFSFQDDDDHTFDDIEMGAYGTGRKNKK.

Positions 1–21 (MSSNTTTPTPTSTPTPTSSPS) are enriched in low complexity. Residues 1–22 (MSSNTTTPTPTSTPTPTSSPSI) are disordered. Helical transmembrane passes span 34–54 (FGNL…VLIG), 66–86 (IYAT…AYLV), 128–148 (FLYF…QSFS), 167–187 (VILY…ILSV), and 195–215 (FLSF…TITM). Positions 236–266 (LRNYRVEAVVLKTELEDVKRQLIDHLKLIKT) form a coiled coil. Helical transmembrane passes span 401 to 421 (FIIA…SEIV), 442 to 462 (PGIG…VCSY), and 539 to 559 (FTLF…FNLH). 3 disordered regions span residues 630–665 (SQLD…PKLS), 701–751 (LGEK…TKDK), and 765–790 (SFQD…KNKK). Residues 644–665 (IDSSNRYKPTPTKTSINIPKLS) are compositionally biased toward polar residues. Over residues 706-734 (NASNNNNNNNNNNNNNNSNNKNSNNNNNS) the composition is skewed to low complexity. The segment covering 735-746 (ILTSNYESYSTP) has biased composition (polar residues). Positions 766–778 (FQDDDDHTFDDIE) are enriched in acidic residues.

This sequence belongs to the LIMR family.

Its subcellular location is the membrane. The chain is LMBR1 domain-containing protein 2 homolog B from Dictyostelium discoideum (Social amoeba).